The following is a 315-amino-acid chain: Deoxyhypusine hydroxylase (315 aa).

HEAT-like PBS-type repeat units lie at residues 23 to 52 (IAKR…LNDK), 56 to 82 (LRHE…LVKN), 89 to 115 (VRHE…YSND), 179 to 205 (NRYR…GLKD), 211 to 237 (LRHE…CVLD), and 244 to 270 (VRHE…LLQD). Histidine 58, histidine 91, and glutamate 92 together coordinate Fe cation. Residues histidine 213, histidine 246, and glutamate 247 each coordinate Fe cation.

The protein belongs to the deoxyhypusine hydroxylase family. Fe(2+) is required as a cofactor.

It catalyses the reaction [eIF5A protein]-deoxyhypusine + AH2 + O2 = [eIF5A protein]-hypusine + A + H2O. The protein operates within protein modification; eIF5A hypusination. In terms of biological role, catalyzes the hydroxylation of the N(6)-(4-aminobutyl)-L-lysine intermediate produced by deoxyhypusine synthase/DHPS on a critical lysine of the eukaryotic translation initiation factor 5A/eIF-5A. This is the second step of the post-translational modification of that lysine into an unusual amino acid residue named hypusine. Hypusination is unique to mature eIF-5A factor and is essential for its function. In Dictyostelium discoideum (Social amoeba), this protein is Deoxyhypusine hydroxylase (dohh-1).